Consider the following 28-residue polypeptide: Ranatuerin-2SEb (28 aa).

Cys23 and Cys28 are disulfide-bonded.

As to expression, expressed by the skin glands.

Its subcellular location is the secreted. Its function is as follows. Mast cell degranulating peptide. Causes histamine release from rat peritoneal mast cells in vitro. Has antibacterial activity against the Gram-negative bacterium E.coli K12 and Gram-positive bacterium M.luteus NCT C2665. The protein is Ranatuerin-2SEb of Lithobates sevosus (Dusky gopher frog).